A 190-amino-acid chain; its full sequence is Cytoplasmic envelopment protein 3 (190 aa).

A lipid anchor (N-myristoyl glycine; by host) is attached at Gly-2. Positions Gly-14–Phe-190 are disordered. Residues Ser-30–Ser-43 show a composition bias toward polar residues. Acidic residues predominate over residues Asp-44–Glu-58. A compositionally biased stretch (basic and acidic residues) spans Ser-80–Lys-90. Over residues Lys-108–Gln-123 the composition is skewed to basic residues. Acidic residues predominate over residues Glu-130–Thr-139.

The protein belongs to the herpesviridae cytoplasmic envelopment protein 3 family. In terms of assembly, interacts with cytoplasmic envelopment protein 2; this interaction is essential for the proper localization of each protein to the assembly complex and thus for the production of infectious virus. In terms of processing, myristoylation and palmitoylation (probably on one or more of the nearby cysteines at the N-terminus) enable membrane-binding and Golgi apparatus-specific targeting and are essential for efficient packaging. Post-translationally, phosphorylated. Phosphorylation does not seem to be required for recycling to the host Golgi apparatus. Packaging is selective for underphosphorylated forms.

Its subcellular location is the virion tegument. The protein localises to the virion membrane. It localises to the host cell membrane. It is found in the host Golgi apparatus membrane. Functionally, plays an important role in the cytoplasmic envelopment of tegument proteins and capsids during the assembly and egress processes. Also participates in viral entry at the fusion step probably by regulating the core fusion machinery. This chain is Cytoplasmic envelopment protein 3 (UL99), found in Human cytomegalovirus (strain Merlin) (HHV-5).